A 359-amino-acid chain; its full sequence is uncharacterized protein (359 aa).

The protein belongs to the glycosyltransferase group 1 family. Glycosyltransferase 4 subfamily.

This is an uncharacterized protein from Bacillus subtilis (strain 168).